The sequence spans 204 residues: LexA repressor (204 aa).

The segment at residues 28 to 48 (RAEIAQELGFKSPNAAEEHLK) is a DNA-binding region (H-T-H motif). Residues Ser125 and Lys162 each act as for autocatalytic cleavage activity in the active site.

It belongs to the peptidase S24 family. In terms of assembly, homodimer.

The enzyme catalyses Hydrolysis of Ala-|-Gly bond in repressor LexA.. In terms of biological role, represses a number of genes involved in the response to DNA damage (SOS response), including recA and lexA. In the presence of single-stranded DNA, RecA interacts with LexA causing an autocatalytic cleavage which disrupts the DNA-binding part of LexA, leading to derepression of the SOS regulon and eventually DNA repair. This is LexA repressor from Pseudomonas aeruginosa (strain LESB58).